The sequence spans 430 residues: UDP-N-acetylglucosamine 1-carboxyvinyltransferase 1 (430 aa).

Residue 22-23 (KN) coordinates phosphoenolpyruvate. Residue Arg93 coordinates UDP-N-acetyl-alpha-D-glucosamine. The active-site Proton donor is the Cys117. A 2-(S-cysteinyl)pyruvic acid O-phosphothioketal modification is found at Cys117. Residues 122–126 (RPVDL), Asp305, and Val327 each bind UDP-N-acetyl-alpha-D-glucosamine.

This sequence belongs to the EPSP synthase family. MurA subfamily.

It is found in the cytoplasm. The enzyme catalyses phosphoenolpyruvate + UDP-N-acetyl-alpha-D-glucosamine = UDP-N-acetyl-3-O-(1-carboxyvinyl)-alpha-D-glucosamine + phosphate. The protein operates within cell wall biogenesis; peptidoglycan biosynthesis. Its function is as follows. Cell wall formation. Adds enolpyruvyl to UDP-N-acetylglucosamine. This chain is UDP-N-acetylglucosamine 1-carboxyvinyltransferase 1, found in Listeria innocua serovar 6a (strain ATCC BAA-680 / CLIP 11262).